The sequence spans 208 residues: MAKVPVYNIEGQQIGEIELNDSIFNVPINTHVLHQAVVAHLANRRQGTFAAKTRAEVRGGGRKPWRQKGTGRARQGSIRAPTWRKGGVVFAKKPRDFSIDLPKKVKRLALKCALSSKVKENNLIVLDRWDMNQYKTKEVLRVLKNLGLENQKALIVIPEKNEYLQKSTKNIPEVKTLQVGNLNVFDILKYDKFVILQDAVKKVEEVYA.

The tract at residues 58–77 (RGGGRKPWRQKGTGRARQGS) is disordered. The segment covering 60 to 71 (GGRKPWRQKGTG) has biased composition (basic residues).

This sequence belongs to the universal ribosomal protein uL4 family. As to quaternary structure, part of the 50S ribosomal subunit.

In terms of biological role, one of the primary rRNA binding proteins, this protein initially binds near the 5'-end of the 23S rRNA. It is important during the early stages of 50S assembly. It makes multiple contacts with different domains of the 23S rRNA in the assembled 50S subunit and ribosome. Its function is as follows. Forms part of the polypeptide exit tunnel. The chain is Large ribosomal subunit protein uL4 from Caldicellulosiruptor bescii (strain ATCC BAA-1888 / DSM 6725 / KCTC 15123 / Z-1320) (Anaerocellum thermophilum).